A 612-amino-acid chain; its full sequence is Alpha-glycerophosphate oxidase (612 aa).

Position 21–49 (D21–E49) interacts with FAD. Basic and acidic residues predominate over residues V398–D408. Residues V398 to F418 are disordered.

Belongs to the FAD-dependent glycerol-3-phosphate dehydrogenase family. Requires FAD as cofactor.

Its subcellular location is the cytoplasm. The enzyme catalyses sn-glycerol 3-phosphate + O2 = dihydroxyacetone phosphate + H2O2. The protein is Alpha-glycerophosphate oxidase (glpO) of Streptococcus pyogenes serotype M18 (strain MGAS8232).